The primary structure comprises 464 residues: Armadillo repeat-containing protein 6 homolog (464 aa).

Residue Thr9 is modified to Phosphothreonine. 4 ARM repeats span residues 235-275 (AHEH…TLAV), 287-331 (GGLK…QQGV), 332-374 (APII…FDTG), and 375-418 (IAEV…ISFG).

It belongs to the ARMC6 family.

This is Armadillo repeat-containing protein 6 homolog from Drosophila melanogaster (Fruit fly).